A 179-amino-acid polypeptide reads, in one-letter code: Large ribosomal subunit protein uL5 (179 aa).

This sequence belongs to the universal ribosomal protein uL5 family. In terms of assembly, part of the 50S ribosomal subunit; part of the 5S rRNA/L5/L18/L25 subcomplex. Contacts the 5S rRNA and the P site tRNA. Forms a bridge to the 30S subunit in the 70S ribosome.

In terms of biological role, this is one of the proteins that bind and probably mediate the attachment of the 5S RNA into the large ribosomal subunit, where it forms part of the central protuberance. In the 70S ribosome it contacts protein S13 of the 30S subunit (bridge B1b), connecting the 2 subunits; this bridge is implicated in subunit movement. Contacts the P site tRNA; the 5S rRNA and some of its associated proteins might help stabilize positioning of ribosome-bound tRNAs. In Halothermothrix orenii (strain H 168 / OCM 544 / DSM 9562), this protein is Large ribosomal subunit protein uL5.